A 253-amino-acid chain; its full sequence is MRILLSNDDGIHAPGIQTLAKALREFADVQVVAPDRNRSGASNSLTLESSLRTFTFDNGDIAVQMGTPTDCVYLGVNALMRPRPDIVVSGINAGPNLGDDVIYSGTVAAAMEGRHLGFPALAVSLNGYQHYDTAAAVTCALLRGLSREPLRTGRILNVNVPDLPLAQIKGIRVTRCGSRHPADKVIPQEDPRGNTLYWIGPPGDKYDAGPDTDFAAVDEGYVSVTPLHVDLTAHSAHDVVSDWLDSVGVGTQW.

Aspartate 8, aspartate 9, serine 39, and asparagine 92 together coordinate a divalent metal cation.

This sequence belongs to the SurE nucleotidase family. The cofactor is a divalent metal cation.

It is found in the cytoplasm. It catalyses the reaction a ribonucleoside 5'-phosphate + H2O = a ribonucleoside + phosphate. It carries out the reaction a ribonucleoside 3'-phosphate + H2O = a ribonucleoside + phosphate. The catalysed reaction is [phosphate](n) + H2O = [phosphate](n-1) + phosphate + H(+). Its function is as follows. Nucleotidase with a broad substrate specificity as it can dephosphorylate various ribo- and deoxyribonucleoside 5'-monophosphates and ribonucleoside 3'-monophosphates with highest affinity to 3'-AMP. Also hydrolyzes polyphosphate (exopolyphosphatase activity) with the preference for short-chain-length substrates (P20-25). Might be involved in the regulation of dNTP and NTP pools, and in the turnover of 3'-mononucleotides produced by numerous intracellular RNases (T1, T2, and F) during the degradation of various RNAs. The chain is 5'/3'-nucleotidase SurE from Salmonella arizonae (strain ATCC BAA-731 / CDC346-86 / RSK2980).